The following is a 615-amino-acid chain: Elongation factor 4 (615 aa).

The 187-residue stretch at 14-200 folds into the tr-type G domain; that stretch reads SKIRNFCIIA…KVAELIPAPT (187 aa). GTP-binding positions include 26-31 and 147-150; these read DHGKST and NKID.

The protein belongs to the TRAFAC class translation factor GTPase superfamily. Classic translation factor GTPase family. LepA subfamily.

The protein localises to the cell membrane. The catalysed reaction is GTP + H2O = GDP + phosphate + H(+). Its function is as follows. Required for accurate and efficient protein synthesis under certain stress conditions. May act as a fidelity factor of the translation reaction, by catalyzing a one-codon backward translocation of tRNAs on improperly translocated ribosomes. Back-translocation proceeds from a post-translocation (POST) complex to a pre-translocation (PRE) complex, thus giving elongation factor G a second chance to translocate the tRNAs correctly. Binds to ribosomes in a GTP-dependent manner. In Corynebacterium aurimucosum (strain ATCC 700975 / DSM 44827 / CIP 107346 / CN-1) (Corynebacterium nigricans), this protein is Elongation factor 4.